Consider the following 398-residue polypeptide: Succinate--CoA ligase [ADP-forming] subunit beta (398 aa).

The ATP-grasp domain occupies 9-253 (MALLNERGVS…AGASDPLEQE (245 aa)). ATP contacts are provided by residues Lys-46, 53 to 55 (GRG), Val-111, and Glu-116. Residues Asn-208 and Asp-222 each contribute to the Mg(2+) site. Residues Asn-273 and 330-332 (GIM) contribute to the substrate site.

Belongs to the succinate/malate CoA ligase beta subunit family. In terms of assembly, heterotetramer of two alpha and two beta subunits. Mg(2+) serves as cofactor.

It catalyses the reaction succinate + ATP + CoA = succinyl-CoA + ADP + phosphate. The enzyme catalyses GTP + succinate + CoA = succinyl-CoA + GDP + phosphate. Its pathway is carbohydrate metabolism; tricarboxylic acid cycle; succinate from succinyl-CoA (ligase route): step 1/1. Functionally, succinyl-CoA synthetase functions in the citric acid cycle (TCA), coupling the hydrolysis of succinyl-CoA to the synthesis of either ATP or GTP and thus represents the only step of substrate-level phosphorylation in the TCA. The beta subunit provides nucleotide specificity of the enzyme and binds the substrate succinate, while the binding sites for coenzyme A and phosphate are found in the alpha subunit. The protein is Succinate--CoA ligase [ADP-forming] subunit beta of Zymomonas mobilis subsp. mobilis (strain ATCC 31821 / ZM4 / CP4).